Consider the following 302-residue polypeptide: tRNA dimethylallyltransferase (302 aa).

8–15 lines the ATP pocket; that stretch reads GSSGSGKS. 10 to 15 contributes to the substrate binding site; sequence SGSGKS. An interaction with substrate tRNA region spans residues 33-36; the sequence is DSLS.

Belongs to the IPP transferase family. In terms of assembly, monomer. The cofactor is Mg(2+).

The enzyme catalyses adenosine(37) in tRNA + dimethylallyl diphosphate = N(6)-dimethylallyladenosine(37) in tRNA + diphosphate. Its function is as follows. Catalyzes the transfer of a dimethylallyl group onto the adenine at position 37 in tRNAs that read codons beginning with uridine, leading to the formation of N6-(dimethylallyl)adenosine (i(6)A). The sequence is that of tRNA dimethylallyltransferase from Helicobacter hepaticus (strain ATCC 51449 / 3B1).